Reading from the N-terminus, the 637-residue chain is Nuclear receptor-binding protein homolog (637 aa).

Residues Met1–Thr14 are compositionally biased toward polar residues. 2 disordered regions span residues Met1 to Ala60 and Ser74 to Glu99. Positions Pro36–Gln46 are enriched in low complexity. Positions Asp88–Glu98 are enriched in acidic residues. The 267-residue stretch at Arg109–Leu375 folds into the Protein kinase domain. 2 disordered regions span residues Pro465–Asp489 and Pro617–Asn637. Phosphoserine occurs at positions 473, 479, and 482. At Thr484 the chain carries Phosphothreonine.

This sequence belongs to the protein kinase superfamily. Ser/Thr protein kinase family.

It is found in the cytoplasm. It localises to the cell cortex. Its function is as follows. May play a role in subcellular trafficking between the endoplasmic reticulum and Golgi apparatus. This is Nuclear receptor-binding protein homolog from Drosophila melanogaster (Fruit fly).